A 250-amino-acid chain; its full sequence is Ureidoacrylate amidohydrolase RutB (250 aa).

Aspartate 44 (proton acceptor) is an active-site residue. The active site involves lysine 153. The active-site Nucleophile is the cysteine 186.

Belongs to the isochorismatase family. RutB subfamily.

The catalysed reaction is (Z)-3-ureidoacrylate + H2O + H(+) = (Z)-3-aminoacrylate + NH4(+) + CO2. It catalyses the reaction (Z)-3-ureidoacrylate + H2O = (Z)-3-aminoacrylate + carbamate + H(+). The enzyme catalyses (Z)-2-methylureidoacrylate + H2O + H(+) = (Z)-2-methylaminoacrylate + NH4(+) + CO2. Hydrolyzes ureidoacrylate to form aminoacrylate and carbamate. The carbamate hydrolyzes spontaneously, thereby releasing one of the nitrogen atoms of the pyrimidine ring as ammonia and one of its carbon atoms as CO2. The protein is Ureidoacrylate amidohydrolase RutB of Pantoea ananatis (strain LMG 20103).